The chain runs to 368 residues: Phosphate acyltransferase (368 aa).

A disordered region spans residues 334–368 (AAPLGESGRDADGAGQASPSAGQPAEPSAALSSKT).

Belongs to the PlsX family. Homodimer. Probably interacts with PlsY.

Its subcellular location is the cytoplasm. The catalysed reaction is a fatty acyl-[ACP] + phosphate = an acyl phosphate + holo-[ACP]. Its pathway is lipid metabolism; phospholipid metabolism. In terms of biological role, catalyzes the reversible formation of acyl-phosphate (acyl-PO(4)) from acyl-[acyl-carrier-protein] (acyl-ACP). This enzyme utilizes acyl-ACP as fatty acyl donor, but not acyl-CoA. The protein is Phosphate acyltransferase of Burkholderia thailandensis (strain ATCC 700388 / DSM 13276 / CCUG 48851 / CIP 106301 / E264).